We begin with the raw amino-acid sequence, 302 residues long: Ornithine carbamoyltransferase (302 aa).

Carbamoyl phosphate contacts are provided by residues Ser52 to Thr55, Gln79, Arg103, and His130 to Gln133. L-ornithine is bound by residues Asn161, Asp221, and Ser225–Met226. Carbamoyl phosphate contacts are provided by residues Cys261 to Leu262 and Arg289.

It belongs to the aspartate/ornithine carbamoyltransferase superfamily. OTCase family.

It localises to the cytoplasm. The enzyme catalyses carbamoyl phosphate + L-ornithine = L-citrulline + phosphate + H(+). It participates in amino-acid biosynthesis; L-arginine biosynthesis; L-arginine from L-ornithine and carbamoyl phosphate: step 1/3. Reversibly catalyzes the transfer of the carbamoyl group from carbamoyl phosphate (CP) to the N(epsilon) atom of ornithine (ORN) to produce L-citrulline. The protein is Ornithine carbamoyltransferase of Methanosarcina acetivorans (strain ATCC 35395 / DSM 2834 / JCM 12185 / C2A).